The primary structure comprises 134 residues: Phosphoribosyl-AMP cyclohydrolase (134 aa).

Asp-77 provides a ligand contact to Mg(2+). A Zn(2+)-binding site is contributed by Cys-78. Residues Asp-79 and Asp-81 each contribute to the Mg(2+) site. Positions 95 and 102 each coordinate Zn(2+).

It belongs to the PRA-CH family. Homodimer. It depends on Mg(2+) as a cofactor. The cofactor is Zn(2+).

It is found in the cytoplasm. The catalysed reaction is 1-(5-phospho-beta-D-ribosyl)-5'-AMP + H2O = 1-(5-phospho-beta-D-ribosyl)-5-[(5-phospho-beta-D-ribosylamino)methylideneamino]imidazole-4-carboxamide. The protein operates within amino-acid biosynthesis; L-histidine biosynthesis; L-histidine from 5-phospho-alpha-D-ribose 1-diphosphate: step 3/9. Catalyzes the hydrolysis of the adenine ring of phosphoribosyl-AMP. The polypeptide is Phosphoribosyl-AMP cyclohydrolase (Pseudomonas aeruginosa (strain LESB58)).